A 606-amino-acid polypeptide reads, in one-letter code: Aspartate--tRNA(Asp/Asn) ligase (606 aa).

An L-aspartate-binding site is contributed by Glu177. Positions 201–204 (QLFK) are aspartate. An L-aspartate-binding site is contributed by Arg223. Residues 223–225 (RDE) and Gln232 contribute to the ATP site. His461 is a binding site for L-aspartate. Glu499 contributes to the ATP binding site. Arg506 is a binding site for L-aspartate. 551-554 (GMDR) is an ATP binding site.

The protein belongs to the class-II aminoacyl-tRNA synthetase family. Type 1 subfamily. Homodimer.

The protein localises to the cytoplasm. It catalyses the reaction tRNA(Asx) + L-aspartate + ATP = L-aspartyl-tRNA(Asx) + AMP + diphosphate. In terms of biological role, aspartyl-tRNA synthetase with relaxed tRNA specificity since it is able to aspartylate not only its cognate tRNA(Asp) but also tRNA(Asn). Reaction proceeds in two steps: L-aspartate is first activated by ATP to form Asp-AMP and then transferred to the acceptor end of tRNA(Asp/Asn). In Prochlorococcus marinus (strain MIT 9303), this protein is Aspartate--tRNA(Asp/Asn) ligase.